A 189-amino-acid chain; its full sequence is HTH-type transcriptional repressor AcnR (189 aa).

In terms of domain architecture, HTH tetR-type spans alanine 10–methionine 70. A DNA-binding region (H-T-H motif) is located at residues threonine 33–tyrosine 52. Residues leucine 79 to isoleucine 80, arginine 130, and glutamine 134 contribute to the citrate site. Glutamate 181 serves as a coordination point for Mg(2+). Arginine 185 serves as a coordination point for citrate.

In terms of assembly, homodimer.

In terms of biological role, acnR negatively controls the expression of the aconitase gene acn. This Corynebacterium jeikeium (strain K411) protein is HTH-type transcriptional repressor AcnR.